A 332-amino-acid chain; its full sequence is MTKQDQRAERHIPVLLQPVLAGLMPLVGAKVIDGTFGAGGYTRALLKAGAQVIALDRDPHAIAAGQSLVDEFFPRLRLVHMEFSQLDRVVEEKVDAVILDIGVSSMQLDEAERGFSFQKDGPLDMRMAQTGFSASDVVNHLKAKDLARIFKILGEERYAGRIARMIEKRRAVQPFLRTGDLAYAIEALVGRKPGDRIHPATRVFQALRIYVNDEIGELARGLFAAERVLKAGGRLGVVSFHSLEDRMVKRFFVSRSGEGMRSRHLPEIKHSPATFFPLFKGGITANKEELQQNPRSRSARLRMGVRTNAEALAEDMKLFGLAEIASFEGGKK.

S-adenosyl-L-methionine is bound by residues 39–41 (GGY), D56, F83, D100, and Q107.

This sequence belongs to the methyltransferase superfamily. RsmH family.

The protein localises to the cytoplasm. The enzyme catalyses cytidine(1402) in 16S rRNA + S-adenosyl-L-methionine = N(4)-methylcytidine(1402) in 16S rRNA + S-adenosyl-L-homocysteine + H(+). Specifically methylates the N4 position of cytidine in position 1402 (C1402) of 16S rRNA. This Bartonella tribocorum (strain CIP 105476 / IBS 506) protein is Ribosomal RNA small subunit methyltransferase H.